The following is a 232-amino-acid chain: Sugar fermentation stimulation protein homolog (232 aa).

The protein belongs to the SfsA family.

The sequence is that of Sugar fermentation stimulation protein homolog from Pelagibacter ubique (strain HTCC1062).